Consider the following 1186-residue polypeptide: Trafficking protein particle complex II-specific subunit 120 homolog (1186 aa).

2 disordered regions span residues 777–824 (PTDS…EKES) and 964–984 (TKDP…SEKN). The span at 779 to 792 (DSDNTMSSGRNAAG) shows a compositional bias: polar residues. Serine 971 is modified (phosphoserine). A compositionally biased stretch (low complexity) spans 972 to 981 (PSSSRNPSFS).

This sequence belongs to the TRS120 family. As to quaternary structure, part of the multisubunit TRAPP (transport protein particle) II complex composed of BET3, BET5, TRS20, TRS23, TRS31, TRS33, TRS65, TRS85, TRS120 and TRS130. In terms of tissue distribution, expressed in roots, leaves, stems and flowers.

It is found in the golgi apparatus. The protein resides in the trans-Golgi network. Its subcellular location is the early endosome. Specific subunit of the TRAPP II complex, a highly conserved vesicle tethering complex that is required for the proper transport of proteins in post-Golgi trafficking pathways to the growing cell plate in mitotic active cells. Required for the polarized and selective transport of PIN2 and probably PIN1 to the plasma membrane. Not required for ER-to-Golgi as well as biosynthetic and endocytic vacuolar transport. This chain is Trafficking protein particle complex II-specific subunit 120 homolog, found in Arabidopsis thaliana (Mouse-ear cress).